A 688-amino-acid chain; its full sequence is Collagen alpha-2(IX) chain (688 aa).

An N-terminal signal peptide occupies residues 1–22 (MAPAADPRSLLVLLQVLGLALA). The interval 26–162 (GLPGEPGPPG…PGKPGRPGTI (137 aa)) is triple-helical region 4 (COL4). Disordered regions lie at residues 26-520 (GLPG…RDAS), 549-578 (GATG…PGPR), and 590-662 (IGNT…LPGF). 2 stretches are compositionally biased toward pro residues: residues 30–42 (EPGP…PPGV) and 105–126 (LPGP…PGPV). Residues 128-138 (LPGEIGLTGPK) show a composition bias toward low complexity. Residues 143-156 (PEGPSGPPGPPGKP) show a composition bias toward pro residues. At Pro159 the chain carries 4-hydroxyproline. The nonhelical region 4 (NC4) stretch occupies residues 163–179 (QGLEGSADFLCPTNCPA). The O-linked (Xyl...) (glycosaminoglycan) serine glycan is linked to Ser168. A triple-helical region 3 (COL3) region spans residues 180–518 (GVKGPPGLQG…PGRQGVAGRD (339 aa)). A 5-hydroxylysine modification is found at Lys182. O-linked (Gal...) hydroxylysine glycosylation is present at Lys182. Composition is skewed to low complexity over residues 251–265 (KGMV…SPGE) and 394–412 (PVGQ…EQGP). A compositionally biased stretch (gly residues) spans 435-444 (GPRGGVGDPG). Residues 497–506 (RGLVGDRGLP) show a composition bias toward low complexity. The interval 519-548 (ASDQHIEDVVLKMLQEQLAEMAVSAKREAL) is nonhelical region 3 (NC3). A triple-helical region 2 (COL2) region spans residues 549–631 (GATGMMGPPG…PGLPGRPGQA (83 aa)). The span at 556–565 (PPGPPGPPGY) shows a compositional bias: pro residues. Residues 598-610 (KRGEKGDQGEVGR) show a composition bias toward basic and acidic residues. Positions 632 to 633 (IN) are nonhelical region 2 (NC2). The triple-helical region 1 (COL1) stretch occupies residues 634–663 (GKDGDRGAPGAPGEAGRPGLPGPIGLPGFC). The segment covering 641 to 651 (APGAPGEAGRP) has biased composition (low complexity). The interval 664-688 (EPAACLGASAYASGRLTEPGSIKGP) is nonhelical region 1 (NC1).

This sequence belongs to the fibril-associated collagens with interrupted helices (FACIT) family. In terms of assembly, heterotrimer of an alpha 1(IX), an alpha 2(IX) and an alpha 3(IX) chain. The chains are linked to each other by interchain disulfide bonds. Trimers are also cross-linked via hydroxylysines. Post-translationally, prolines at the third position of the tripeptide repeating unit (G-X-Y) are hydroxylated in some or all of the chains. In terms of processing, covalently linked to the telopeptides of type II collagen by hydroxylysine-derived cross-links.

The protein resides in the secreted. The protein localises to the extracellular space. Its subcellular location is the extracellular matrix. In terms of biological role, structural component of hyaline cartilage and vitreous of the eye. This is Collagen alpha-2(IX) chain from Bos taurus (Bovine).